Consider the following 1199-residue polypeptide: Metabotropic glutamate receptor 1 (1199 aa).

The N-terminal stretch at 1 to 18 is a signal peptide; it reads MVRLLLIFFPMIFLEMSI. At 19–592 the chain is on the extracellular side; that stretch reads LPRMPDRKVL…VRYLEWSDIE (574 aa). Residues Cys67 and Cys109 are joined by a disulfide bond. Position 74 (Tyr74) interacts with L-glutamate. Residue Asn98 is glycosylated (N-linked (GlcNAc...) asparagine). L-glutamate is bound by residues Ser165 and 186-188; that span reads SAT. An N-linked (GlcNAc...) asparagine glycan is attached at Asn223. Tyr236 lines the L-glutamate pocket. A disulfide bridge connects residues Cys289 and Cys291. Residue Asp318 coordinates L-glutamate. A disulfide bridge links Cys378 with Cys394. N-linked (GlcNAc...) asparagine glycosylation occurs at Asn397. An L-glutamate-binding site is contributed by Lys409. Cysteines 432 and 439 form a disulfide. N-linked (GlcNAc...) asparagine glycosylation occurs at Asn515. A helical transmembrane segment spans residues 593 to 615; the sequence is SIIAIAFSCLGILVTLFVTLIFV. The Cytoplasmic portion of the chain corresponds to 616-629; that stretch reads LYRDTPVVKSSSRE. The helical transmembrane segment at 630 to 650 threads the bilayer; sequence LCYIILAGIFLGYVCPFTLIA. The Extracellular portion of the chain corresponds to 651 to 658; it reads KPTTTSCY. A disulfide bridge connects residues Cys657 and Cys746. Residues 659-680 traverse the membrane as a helical segment; it reads LQRLLVGLSSAMCYSALVTKTN. The Cytoplasmic segment spans residues 681–703; the sequence is RIARILAGSKKKICTRKPRFMSA. A helical transmembrane segment spans residues 704 to 727; the sequence is WAQVIIASILISVQLTLVVTLIIM. The Extracellular portion of the chain corresponds to 728-750; that stretch reads EPPMPILSYPSIKEVYLICNTSN. Residues 751–772 form a helical membrane-spanning segment; sequence LGVVAPVGYNGLLIMSCTYYAF. Over 773-785 the chain is Cytoplasmic; the sequence is KTRNVPANFNEAK. The chain crosses the membrane as a helical span at residues 786-807; the sequence is YIAFTMYTTCIIWLAFVPIYFG. The Extracellular portion of the chain corresponds to 808–815; that stretch reads SNYKIITT. A helical membrane pass occupies residues 816 to 840; that stretch reads CFAVSLSVTVALGCMFTPKMYIIIA. Residues 841-1199 lie on the Cytoplasmic side of the membrane; sequence KPERNVRSAF…RDYKQSSSTL (359 aa). Ser853 is modified (phosphoserine). Thr871 carries the phosphothreonine modification. Disordered stretches follow at residues 882 to 905, 959 to 1036, and 1056 to 1081; these read GAGNANSNGKSVSWSEPGGRQAPK, EEDN…QPKS, and HAVLAGPGTPGNSLRSLYPPPPPPQH. Positions 885 to 895 are enriched in polar residues; it reads NANSNGKSVSW. Ser894 and Ser969 each carry phosphoserine. A compositionally biased stretch (pro residues) spans 1012 to 1033; sequence GLPPPLPQQQPQQPPPQQPPQQ. Ser1098 carries the post-translational modification Phosphoserine. The tract at residues 1120-1177 is disordered; that stretch reads EREGNTEEDELEEEEDLPTASKLTPEDSPALTPPSPFRDSVASGSSVPSSPVSESVLC. Positions 1125 to 1136 are enriched in acidic residues; the sequence is TEEDELEEEEDL. Ser1147 is modified (phosphoserine). At Thr1151 the chain carries Phosphothreonine. Ser1154 carries the phosphoserine modification. A compositionally biased stretch (low complexity) spans 1159 to 1175; that stretch reads SVASGSSVPSSPVSESV.

This sequence belongs to the G-protein coupled receptor 3 family. Homodimer; disulfide-linked. The PPXXF motif binds HOMER1, HOMER2 and HOMER3. Interacts with TAMALIN. Interacts with RYR1, RYR2, ITPR1, SHANK1 and SHANK3. Interacts with SIAH1. As to expression, predominantly expressed in cerebellar Purkinje cells, CA2-CA3 pyramidal cells of the hippocampus, and mitral and tufted cells of the olfactory bulb.

It localises to the cell membrane. The protein localises to the postsynaptic cell membrane. Its subcellular location is the cell projection. It is found in the dendrite. In terms of biological role, G-protein coupled receptor for glutamate. Ligand binding causes a conformation change that triggers signaling via guanine nucleotide-binding proteins (G proteins) and modulates the activity of down-stream effectors. Signaling activates a phosphatidylinositol-calcium second messenger system. May participate in the central action of glutamate in the CNS, such as long-term potentiation in the hippocampus and long-term depression in the cerebellum. May function in the light response in the retina. Induces GRID1 and GRID2 cation-channel activation via GNAQ-PLC-PKC pathway in dopaminergic neurons and cerebellar Purkinje cell, respectively. The sequence is that of Metabotropic glutamate receptor 1 (Grm1) from Rattus norvegicus (Rat).